The following is a 309-amino-acid chain: Calcium homeostasis modulator protein 5 (309 aa).

Topologically, residues 1 to 15 are cytoplasmic; it reads MDAFQGILKFFLNQK. A 1,2-diacyl-sn-glycero-3-phosphate is bound by residues Lys15, Arg32, and Val37. A helical membrane pass occupies residues 16-37; that stretch reads TVIGYSFMALLTVGSERLFSVV. The Extracellular segment spans residues 38–45; the sequence is AFKCPCST. Intrachain disulfides connect Cys41/Cys127, Cys43/Cys158, and Cys142/Cys149. A helical transmembrane segment spans residues 46-70; the sequence is ENMTYGLVFLFAPAWVLLILGFFLN. Residues 71 to 99 lie on the Cytoplasmic side of the membrane; the sequence is NRSWRLFTGCCVNPRKIFPRGHSCRFFYV. The chain crosses the membrane as a helical span at residues 100-129; that stretch reads LGQITLSSLVAPVMWLSVALLNGTFYECAM. The a 1,2-diacyl-sn-glycero-3-phosphate site is built by Gln102 and Asn121. Topologically, residues 130–174 are extracellular; sequence SGTRSSGLLELICKGKPKECWEELHKVSCGKTSMLPTVNEELKLS. The helical transmembrane segment at 175-200 threads the bilayer; that stretch reads LQAQSQILGWCLICSASFFSLLTTCY. The Cytoplasmic portion of the chain corresponds to 201–309; the sequence is ARCRSKVSYL…MVLVGTAHNM (109 aa). Arg202 contacts a 1,2-diacyl-sn-glycero-3-phosphate.

Belongs to the CALHM family. In terms of assembly, oligomerizes to form undecameric cone-shaped channels.

The protein resides in the membrane. Its function is as follows. May assemble to form large pore channels with gating and ion conductance likely regulated by membrane lipids. The polypeptide is Calcium homeostasis modulator protein 5 (Homo sapiens (Human)).